The sequence spans 306 residues: tRNA dimethylallyltransferase (306 aa).

Residue 12-19 coordinates ATP; sequence GPTGTKKS.

This sequence belongs to the IPP transferase family. In terms of assembly, monomer. It depends on Mg(2+) as a cofactor.

It carries out the reaction adenosine(37) in tRNA + dimethylallyl diphosphate = N(6)-dimethylallyladenosine(37) in tRNA + diphosphate. Catalyzes the transfer of a dimethylallyl group onto the adenine at position 37 in tRNAs that read codons beginning with uridine, leading to the formation of N6-(dimethylallyl)adenosine (i(6)A). This is tRNA dimethylallyltransferase from Mycoplasmoides gallisepticum (strain R(low / passage 15 / clone 2)) (Mycoplasma gallisepticum).